We begin with the raw amino-acid sequence, 503 residues long: Cytochrome P450 3A29 (503 aa).

Cys-442 serves as a coordination point for heme.

Belongs to the cytochrome P450 family. Heme serves as cofactor.

It is found in the endoplasmic reticulum membrane. The protein localises to the microsome membrane. It catalyses the reaction an organic molecule + reduced [NADPH--hemoprotein reductase] + O2 = an alcohol + oxidized [NADPH--hemoprotein reductase] + H2O + H(+). Cytochromes P450 are a group of heme-thiolate monooxygenases. In liver microsomes, this enzyme is involved in an NADPH-dependent electron transport pathway. It oxidizes a variety of structurally unrelated compounds, including steroids, fatty acids, and xenobiotics. This chain is Cytochrome P450 3A29 (CYP3A29), found in Sus scrofa (Pig).